The chain runs to 388 residues: PIVSKMALLDDNLSKALKLLADVPLIDGHNDFPYFIRGWFPEQIDSLDCRNVRIAHTDLERLNQGRVGGVFWSAYVPCPDRHAKNDFVVDAQYESLRATMQQIDIIHTLIERYSDRLGLARTSSEVWEVFRSGRIASLIGVEGLHQIANSPGVMRNLYRLGVRYITLTHDSNNLYADSTNSSGPFHGGLSRDGISIVKEMNRIGMMVDLSHTSVATQKHVLAISKAPVIFSHSSCASVTEHPRNSPDDVLDMLKANGGVFMITFIRKPTDAESPTLEKVADHVQHVGDRIGYEHVGIGSDFDGVMLTASGLDDVSKFPLLIAELLKRGVSDHSIKNMIGLNVLRVMDSVEEVSMKMKETGEEMLHEVFEEIWDEKMRDEVRKTRDIFD.

The Zn(2+) site is built by histidine 29, aspartate 31, and glutamate 142. Residues histidine 169, arginine 243, and aspartate 300 each contribute to the substrate site.

Belongs to the metallo-dependent hydrolases superfamily. Peptidase M19 family. Requires Zn(2+) as cofactor.

It catalyses the reaction an L-aminoacyl-L-amino acid + H2O = 2 an L-alpha-amino acid. The protein operates within mycotoxin biosynthesis. Its function is as follows. Dipeptidase; part of the gene cluster that mediates the biosynthesis of 11'-deoxyverticillin A, one of the dimeric epipolythiodioxopiperazines (ETPs) from the verticillin family that act as mycotoxins. 11'-deoxyverticillin A is required for normal conidiation. The nonribosomal peptide synthetase verP is speculated to be responsible for condensation of amino acids to form the carbon skeleton of verticillin, whereas the cluster-specific tailoring enzymes are involved in further modifications leading to the production of 11'-deoxyverticillin A. This is Dipeptidase verJ from Clonostachys rogersoniana.